The primary structure comprises 719 residues: Exonuclease mut-7 homolog (719 aa).

A disordered region spans residues 1 to 22 (MSKSNNVAPPCRQDQLGFVPAG). The 55-residue stretch at 575–629 (NLANLVRLCLGKKLDKSNQFSNWAQRPLRKEQLRYAALDAFCLLEIYDAIEKQLT) folds into the 3'-5' exonuclease domain. The tract at residues 644–719 (NDVRPPSDSG…FEGPNTKSVL (76 aa)) is disordered. Over residues 667–678 (RRNHRDKYNKRH) the composition is skewed to basic residues. Polar residues-rich tracts occupy residues 683 to 692 (DSNSGNSSRA) and 706 to 719 (EQQTFEGPNTKSVL).

This sequence belongs to the mut-7 family. Mg(2+) is required as a cofactor.

In terms of biological role, possesses 3'-5' exoribonuclease activity. Required for 3'-end trimming of AGO1-bound miRNAs. The chain is Exonuclease mut-7 homolog from Aedes aegypti (Yellowfever mosquito).